Here is a 365-residue protein sequence, read N- to C-terminus: Cobalt-precorrin-5B C(1)-methyltransferase (365 aa).

This sequence belongs to the CbiD family.

It catalyses the reaction Co-precorrin-5B + S-adenosyl-L-methionine = Co-precorrin-6A + S-adenosyl-L-homocysteine. The protein operates within cofactor biosynthesis; adenosylcobalamin biosynthesis; cob(II)yrinate a,c-diamide from sirohydrochlorin (anaerobic route): step 6/10. In terms of biological role, catalyzes the methylation of C-1 in cobalt-precorrin-5B to form cobalt-precorrin-6A. This is Cobalt-precorrin-5B C(1)-methyltransferase from Clostridium perfringens (strain 13 / Type A).